A 970-amino-acid chain; its full sequence is Transcriptional activator protein DAL81 (970 aa).

Disordered stretches follow at residues 1–44, 64–95, and 118–140; these read MDPH…NHDI, NILREKGGSQQQQHQQQQQQQQQQQQQQQQQS, and DNVSNSADHNGSNSNNNNNNNDI. 3 stretches are compositionally biased toward low complexity: residues 15–41, 73–94, and 121–140; these read TKSVKATTKNSSTNNNVNSNNSNNNSN, QQQQHQQQQQQQQQQQQQQQQQ, and SNSADHNGSNSNNNNNNNDI. The segment at residues 150-179 is a DNA-binding region (zn(2)-C6 fungal-type); it reads CNQCRLKKTKCNYFPDLGNCLECETSRTKC. The segment covering 807-823 has biased composition (low complexity); it reads SFPNGTTSTTTPVNPTS. Residues 807–970 are disordered; it reads SFPNGTTSTT…VTINTRETPL (164 aa). Composition is skewed to polar residues over residues 824-836 and 858-870; these read RQTQLESQGSPAI and KTSQSSPNVTPSH. Position 833 is a phosphoserine (S833). Positions 875 to 894 are enriched in low complexity; sequence PPSNTSSPRVNSSTNVNSNT. Polar residues predominate over residues 895 to 906; that stretch reads QMNASPLTSINE. Basic and acidic residues predominate over residues 907 to 938; the sequence is TRQESGDAADEKTAGRERTANEESSTELKDDN. Composition is skewed to polar residues over residues 939 to 954 and 961 to 970; these read PNSNQETSATGNQTIK and VTINTRETPL.

It localises to the nucleus. Positive regulation of genes required for catabolism of GABA (UGA4, UGA1, and UGA2), urea (DUR1 and DUR2), arginine and allantoin. This chain is Transcriptional activator protein DAL81 (DAL81), found in Saccharomyces cerevisiae (strain ATCC 204508 / S288c) (Baker's yeast).